The following is a 355-amino-acid chain: Protein RecA (355 aa).

ATP is bound at residue 73–80 (GPESSGKT).

This sequence belongs to the RecA family.

It is found in the cytoplasm. Functionally, can catalyze the hydrolysis of ATP in the presence of single-stranded DNA, the ATP-dependent uptake of single-stranded DNA by duplex DNA, and the ATP-dependent hybridization of homologous single-stranded DNAs. It interacts with LexA causing its activation and leading to its autocatalytic cleavage. In Solidesulfovibrio magneticus (strain ATCC 700980 / DSM 13731 / RS-1) (Desulfovibrio magneticus), this protein is Protein RecA.